Reading from the N-terminus, the 336-residue chain is Aldo-keto reductase str7 (336 aa).

Asp-57 serves as a coordination point for NADP(+). Tyr-62 serves as the catalytic Proton donor. Position 124 (His-124) interacts with substrate. NADP(+)-binding positions include 154–155 (SE), Gln-174, 206–220 (SPLGRGLLTGQYKSP), and 283–291 (KKIKYLEEN).

Belongs to the aldo/keto reductase family. Aldo/keto reductase 2 subfamily.

The protein operates within mycotoxin biosynthesis. Functionally, aldo-keto reductase; part of the gene cluster that mediates the biosynthesis of strobilurin A, an antifungal polyketide that contains a key beta-methoxyacrylate toxophore that targets the complex III of the mitochondrial electron transport chain. Strobilurin biosynthesis begins with construction of benzoyl CoA by step-wise elimination of ammonia from phenylalanine by the phenylalanine ammonia-lyase str11, oxygenation by str8 and retro-Claisen reaction to form benzoic acid, which is activated to its CoA thiolester benzoyl CoA by the dedicated CoA ligase str10. Benzoyl CoA forms the starter unit for the highly reducing polyketide synthase stpks1 that produces the polyketide prestrobilutin A. The FAD-dependent oxygenase str9 then catalyzes the key oxidative rearrangement responsible for the creation of the beta-methoxyacrylate toxophore. Str9 performs epoxidation of the 2,3 olefin of prestrobilutin A, followed by Meinwald rearrangement to furnish the aldehyde intermediate. Rapid enolization of the aldehyde intermediate would give the beta-methoxyacrylate skeleton and methylations catalyzed by str2 and str3 complete the synthesis and lead to the production of strobilurin A. The short-chain dehydrogenase stl2 and the dehydrogenase str4 play a role in the shunt pathway leading to the production of bolineol. The cluster encodes no obvious halogenase gene that could be involved in production of strobilurin B, nor any obvious dimethylallyl-transferase that could be involved in the production of strobilurin G. It is possible that unknown proteins encoded in, or near, the cluster (such as str1 or stl1) may form new classes of halogenases or dimethylally-transferases, or that the responsible genes are located elsewhere on the genome. Similarly, proteins encoded by str5/str6 hydrolases appear to have no chemical role in the biosynthesis of strobilurin A. Finally, no obvious self-resistance gene is found within the cluster. The protein is Aldo-keto reductase str7 of Strobilurus tenacellus.